The following is a 139-amino-acid chain: MLQPKRTKFRKAHKGRIHGKAKGGMHLDFGAFGLKAQEPARITARQIEAARRAITRHMKRAGRVWIRIFPDVPVSSKPTEVRMGKGKGAPEYWAARVKPGRIMFEIDGVPLAVAEEAMRLGAAKLPIKTRFVARPGEQA.

This sequence belongs to the universal ribosomal protein uL16 family. In terms of assembly, part of the 50S ribosomal subunit.

Its function is as follows. Binds 23S rRNA and is also seen to make contacts with the A and possibly P site tRNAs. The polypeptide is Large ribosomal subunit protein uL16 (Parvibaculum lavamentivorans (strain DS-1 / DSM 13023 / NCIMB 13966)).